Here is a 320-residue protein sequence, read N- to C-terminus: Pantothenate kinase (320 aa).

Position 96–103 (96–103 (GSVAVGKS)) interacts with ATP.

The protein belongs to the prokaryotic pantothenate kinase family.

It localises to the cytoplasm. The enzyme catalyses (R)-pantothenate + ATP = (R)-4'-phosphopantothenate + ADP + H(+). Its pathway is cofactor biosynthesis; coenzyme A biosynthesis; CoA from (R)-pantothenate: step 1/5. This is Pantothenate kinase from Brevibacillus brevis (strain 47 / JCM 6285 / NBRC 100599).